The sequence spans 329 residues: Aspartate carbamoyltransferase catalytic subunit (329 aa).

The carbamoyl phosphate site is built by arginine 66 and threonine 67. Position 94 (lysine 94) interacts with L-aspartate. 3 residues coordinate carbamoyl phosphate: arginine 116, histidine 149, and glutamine 152. 2 residues coordinate L-aspartate: arginine 189 and arginine 243. Glycine 284 and proline 285 together coordinate carbamoyl phosphate.

It belongs to the aspartate/ornithine carbamoyltransferase superfamily. ATCase family. In terms of assembly, heterododecamer (2C3:3R2) of six catalytic PyrB chains organized as two trimers (C3), and six regulatory PyrI chains organized as three dimers (R2).

It catalyses the reaction carbamoyl phosphate + L-aspartate = N-carbamoyl-L-aspartate + phosphate + H(+). It participates in pyrimidine metabolism; UMP biosynthesis via de novo pathway; (S)-dihydroorotate from bicarbonate: step 2/3. In terms of biological role, catalyzes the condensation of carbamoyl phosphate and aspartate to form carbamoyl aspartate and inorganic phosphate, the committed step in the de novo pyrimidine nucleotide biosynthesis pathway. This Gloeobacter violaceus (strain ATCC 29082 / PCC 7421) protein is Aspartate carbamoyltransferase catalytic subunit.